Consider the following 442-residue polypeptide: uncharacterized protein (442 aa).

Residues 211–269 (LDYSTDKPEDSESEDIELEDSESEDSESEDIDQHGGQGPDDDEFNANFDDPQFDEFDFG) are disordered. The segment covering 221–240 (SESEDIELEDSESEDSESED) has biased composition (acidic residues).

Its subcellular location is the virion. This is an uncharacterized protein from Acanthamoeba polyphaga (Amoeba).